A 1069-amino-acid chain; its full sequence is Rab GTPase-activating protein 1 (1069 aa).

Positions 1–79 are disordered; the sequence is MDDKASVGKI…DPPMDDQPGE (79 aa). Over residues 7 to 22 the composition is skewed to low complexity; sequence VGKISVSSDSVSTLNS. Position 42 is a phosphoserine (serine 42). The region spanning 142 to 298 is the PID domain; sequence EDSVVFSKLT…IFTFSVSLEI (157 aa). At serine 360 the chain carries Phosphoserine. The disordered stretch occupies residues 482 to 527; the sequence is ERERRKTTASPSVRLPQSGSQSSVIPSPPEDDEEEDNDEPLLSGSG. Positions 489–506 are enriched in polar residues; it reads TASPSVRLPQSGSQSSVI. Over residues 510-520 the composition is skewed to acidic residues; the sequence is PEDDEEEDNDE. Residues 566–752 form the Rab-GAP TBC domain; the sequence is GVPEALRGEV…HIIDLLLCEG (187 aa). The stretch at 798 to 1047 forms a coiled coil; sequence KKLMELACNM…ALNEVQAAKK (250 aa). Threonine 996 carries the post-translational modification Phosphothreonine.

In terms of assembly, interacts with RAB6A and tubulin gamma.

It is found in the cytoplasm. Its subcellular location is the cytosol. It localises to the cytoskeleton. The protein localises to the microtubule organizing center. The protein resides in the centrosome. Its function is as follows. May act as a GTPase-activating protein of RAB6A. May play a role in microtubule nucleation by centrosome. May participate in a RAB6A-mediated pathway involved in the metaphase-anaphase transition. The sequence is that of Rab GTPase-activating protein 1 from Pongo abelii (Sumatran orangutan).